The sequence spans 334 residues: GTPase Obg (334 aa).

In terms of domain architecture, Obg spans 1–159 (MRFVDEVVIK…KEVRLELNLL (159 aa)). Residues 160-331 (ADVALLGLPN…LAKKLNEFLQ (172 aa)) enclose the OBG-type G domain. Residues 166–173 (GLPNAGKS), 191–195 (FTTMY), 212–215 (DIPG), 282–285 (NKID), and 312–314 (SAA) each bind GTP. Mg(2+) is bound by residues S173 and T193.

This sequence belongs to the TRAFAC class OBG-HflX-like GTPase superfamily. OBG GTPase family. In terms of assembly, monomer. Requires Mg(2+) as cofactor.

The protein resides in the cytoplasm. In terms of biological role, an essential GTPase which binds GTP, GDP and possibly (p)ppGpp with moderate affinity, with high nucleotide exchange rates and a fairly low GTP hydrolysis rate. Plays a role in control of the cell cycle, stress response, ribosome biogenesis and in those bacteria that undergo differentiation, in morphogenesis control. The chain is GTPase Obg from Francisella tularensis subsp. tularensis (strain WY96-3418).